The chain runs to 333 residues: UbiA prenyltransferase domain-containing protein 1 (333 aa).

The interval 13–33 is disordered; the sequence is NAESPRGGERNDCGAGAERGP. Transmembrane regions (helical) follow at residues 78–98, 129–149, 155–175, 177–197, 199–219, 240–260, 265–285, and 310–330; these read LLVGSAVAVLAVHGAGNLVNT, FGVFLYTVGCICAAGLYAVST, LALVYFGGLSSSFLYTGGIGF, YVALGDVVILITFGPLAVMFA, AVQVGYLSVSPLLYAVPLALS, IVTLAIIIGPAFSYVLYTVLL, LIFCVLATRYTISMALPLLTI, and LNLLLGLFYVFGIMLAPAGAL.

It belongs to the UbiA prenyltransferase family.

Its subcellular location is the endoplasmic reticulum membrane. The protein resides in the golgi apparatus membrane. It localises to the mitochondrion membrane. It carries out the reaction menadiol + (2E,6E,10E)-geranylgeranyl diphosphate = menaquinol-4 + diphosphate. The catalysed reaction is all-trans-decaprenyl diphosphate + 4-hydroxybenzoate = 4-hydroxy-3-(all-trans-decaprenyl)benzoate + diphosphate. It functions in the pathway quinol/quinone metabolism; menaquinone biosynthesis. Its pathway is cofactor biosynthesis; ubiquinone biosynthesis. In terms of biological role, prenyltransferase that mediates the formation of menaquinone-4 (MK-4) and coenzyme Q10. MK-4 is a vitamin K2 isoform required for endothelial cell development. Mediates the conversion of phylloquinone (PK) into MK-4, probably by cleaving the side chain of phylloquinone (PK) to release 2-methyl-1,4-naphthoquinone (menadione; K3) and then prenylating it with geranylgeranyl pyrophosphate (GGPP) to form MK-4. Also plays a role in cardiovascular development independently of MK-4 biosynthesis, by acting as a coenzyme Q10 biosynthetic enzyme: coenzyme Q10, also named ubiquinone, plays an important antioxidant role in the cardiovascular system. Mediates biosynthesis of coenzyme Q10 in the Golgi membrane, leading to protect cardiovascular tissues from NOS3/eNOS-dependent oxidative stress. The chain is UbiA prenyltransferase domain-containing protein 1 (UBIAD1) from Gallus gallus (Chicken).